Here is a 212-residue protein sequence, read N- to C-terminus: Imidazole glycerol phosphate synthase subunit HisH (212 aa).

In terms of domain architecture, Glutamine amidotransferase type-1 spans 3–212 (TVAVIDYGMG…QNFIAWDGRW (210 aa)). Cys-81 acts as the Nucleophile in catalysis. Residues His-190 and Glu-192 contribute to the active site.

As to quaternary structure, heterodimer of HisH and HisF.

The protein resides in the cytoplasm. The enzyme catalyses 5-[(5-phospho-1-deoxy-D-ribulos-1-ylimino)methylamino]-1-(5-phospho-beta-D-ribosyl)imidazole-4-carboxamide + L-glutamine = D-erythro-1-(imidazol-4-yl)glycerol 3-phosphate + 5-amino-1-(5-phospho-beta-D-ribosyl)imidazole-4-carboxamide + L-glutamate + H(+). It carries out the reaction L-glutamine + H2O = L-glutamate + NH4(+). The protein operates within amino-acid biosynthesis; L-histidine biosynthesis; L-histidine from 5-phospho-alpha-D-ribose 1-diphosphate: step 5/9. In terms of biological role, IGPS catalyzes the conversion of PRFAR and glutamine to IGP, AICAR and glutamate. The HisH subunit catalyzes the hydrolysis of glutamine to glutamate and ammonia as part of the synthesis of IGP and AICAR. The resulting ammonia molecule is channeled to the active site of HisF. The chain is Imidazole glycerol phosphate synthase subunit HisH from Pseudomonas putida (strain ATCC 47054 / DSM 6125 / CFBP 8728 / NCIMB 11950 / KT2440).